The primary structure comprises 83 residues: Lipolysis-activating peptide 1-alpha chain (83 aa).

A signal peptide spans methionine 1–serine 21. Residues glycine 22–cysteine 83 form the LCN-type CS-alpha/beta domain. 3 cysteine pairs are disulfide-bonded: cysteine 35/cysteine 58, cysteine 44/cysteine 63, and cysteine 48/cysteine 65.

This sequence belongs to the long (3 C-C) scorpion toxin superfamily. Monomer (edited version) and heterodimer (non-edited version) of this alpha chain and a beta chain (AC P0CI43). Expressed by the venom gland.

The protein localises to the secreted. In terms of biological role, the heterodimer non-edited LVP1 induces lipolysis in rat adipocytes. Induction of lipolysis by LVP1 appears to be mediated through the beta-2 adrenergic receptor pathway (ADRB2). Functionally, the edited BmKBTx-like, similar to beta-toxins, may modulate voltage-gated sodium channels (Nav) and may block voltage-gated potassium channels (Kv). This chain is Lipolysis-activating peptide 1-alpha chain, found in Lychas mucronatus (Chinese swimming scorpion).